We begin with the raw amino-acid sequence, 73 residues long: NADH dehydrogenase [ubiquinone] 1 beta subcomplex subunit 3-B (73 aa).

A helical transmembrane segment spans residues 31 to 48 (ALPGLGIGVAAFCVYLVG).

It belongs to the complex I NDUFB3 subunit family. In terms of assembly, complex I is composed of at least 49 different subunits.

It is found in the mitochondrion inner membrane. Its function is as follows. Accessory subunit of the mitochondrial membrane respiratory chain NADH dehydrogenase (Complex I), that is believed not to be involved in catalysis. Complex I functions in the transfer of electrons from NADH to the respiratory chain. The immediate electron acceptor for the enzyme is believed to be ubiquinone. The polypeptide is NADH dehydrogenase [ubiquinone] 1 beta subcomplex subunit 3-B (Arabidopsis thaliana (Mouse-ear cress)).